The following is a 77-amino-acid chain: Exodeoxyribonuclease 7 small subunit (77 aa).

The protein belongs to the XseB family. In terms of assembly, heterooligomer composed of large and small subunits.

The protein localises to the cytoplasm. It carries out the reaction Exonucleolytic cleavage in either 5'- to 3'- or 3'- to 5'-direction to yield nucleoside 5'-phosphates.. Functionally, bidirectionally degrades single-stranded DNA into large acid-insoluble oligonucleotides, which are then degraded further into small acid-soluble oligonucleotides. The sequence is that of Exodeoxyribonuclease 7 small subunit from Carboxydothermus hydrogenoformans (strain ATCC BAA-161 / DSM 6008 / Z-2901).